Here is a 254-residue protein sequence, read N- to C-terminus: 5-oxoprolinase subunit A (254 aa).

It belongs to the LamB/PxpA family. As to quaternary structure, forms a complex composed of PxpA, PxpB and PxpC.

The catalysed reaction is 5-oxo-L-proline + ATP + 2 H2O = L-glutamate + ADP + phosphate + H(+). Its function is as follows. Catalyzes the cleavage of 5-oxoproline to form L-glutamate coupled to the hydrolysis of ATP to ADP and inorganic phosphate. In Burkholderia vietnamiensis (strain G4 / LMG 22486) (Burkholderia cepacia (strain R1808)), this protein is 5-oxoprolinase subunit A.